The chain runs to 23 residues: Basic phospholipase A2 CB1 (23 aa).

As to quaternary structure, heterodimer of an acidic subunit and a basic chain. The acidic subunit is non-toxic, without enzymatic activity and comprises 3 peptides that are cross-linked by 7 disulfide bridges. The basic subunit is toxic, has phospholipase A2 activity and is composed of a single chain. The cofactor is Ca(2+). Post-translationally, contains 7 disulfide bonds. In terms of tissue distribution, expressed by the venom gland.

The protein resides in the secreted. The enzyme catalyses a 1,2-diacyl-sn-glycero-3-phosphocholine + H2O = a 1-acyl-sn-glycero-3-phosphocholine + a fatty acid + H(+). In terms of biological role, snake venom phospholipase A2 (PLA2) that shows presynaptic neurotoxicity. PLA2 catalyzes the calcium-dependent hydrolysis of the 2-acyl groups in 3-sn-phosphoglycerides. The sequence is that of Basic phospholipase A2 CB1 from Crotalus basiliscus (Mexican west-coast rattlesnake).